The sequence spans 391 residues: UPF0328 protein ECU06_1650 (391 aa).

This sequence belongs to the UPF0328 family.

The polypeptide is UPF0328 protein ECU06_1650 (Encephalitozoon cuniculi (strain GB-M1) (Microsporidian parasite)).